The sequence spans 2768 residues: Thyroglobulin (2768 aa).

The signal sequence occupies residues 1–20 (MMTLVLWVSTLLSSVCLVAA). Tyr25 bears the Iodotyrosine; alternate mark. Tyr25 carries the sulfotyrosine; alternate modification. At Tyr25 the chain carries Thyroxine; alternate. Tyr25 bears the Triiodothyronine; alternate mark. 4 consecutive Thyroglobulin type-1 domains span residues 32–93 (LRPC…PTAC), 94–161 (LSFC…PTRC), 162–298 (PRSC…RFRC), and 299–359 (PTKC…PLFC). 8 cysteine pairs are disulfide-bonded: Cys35–Cys53, Cys64–Cys71, Cys73–Cys93, Cys97–Cys121, Cys132–Cys139, Cys141–Cys161, Cys165–Cys184, and Cys195–Cys236. Residue Tyr109 is modified to Iodotyrosine. An N-linked (GlcNAc...) asparagine glycan is attached at Asn111. Tyr150 carries the post-translational modification Iodotyrosine; alternate. Tyr150 is subject to Diiodotyrosine; alternate. The N-linked (GlcNAc...) asparagine glycan is linked to Asn199. Tyr235 and Tyr259 each carry iodotyrosine. 8 disulfide bridges follow: Cys302–Cys320, Cys331–Cys337, Cys339–Cys365, Cys408–Cys608, Cys631–Cys636, Cys638–Cys658, Cys662–Cys687, and Cys698–Cys703. Asn484, Asn496, and Asn545 each carry an N-linked (GlcNAc...) asparagine glycan. Thyroglobulin type-1 domains are found at residues 605-658 (AQAC…HPRC), 659-726 (PTKC…PKLC), 727-922 (PSVC…IPAC), 923-1074 (PGPC…MPQC), 1075-1146 (PTSC…SAQC), and 1147-1211 (PGLC…QPAC). Tyr704 is modified (iodotyrosine; alternate). A Thyroxine; alternate modification is found at Tyr704. The residue at position 704 (Tyr704) is a Triiodothyronine; alternate. The residue at position 704 (Tyr704) is a Diiodotyrosine; alternate. Disulfide bonds link Cys705–Cys726, Cys730–Cys763, Cys774–Cys899, Cys901–Cys922, Cys926–Cys1032, Cys1043–Cys1050, Cys1052–Cys1074, Cys1078–Cys1109, Cys1127–Cys1146, Cys1150–Cys1170, Cys1182–Cys1189, Cys1191–Cys1211, Cys1216–Cys1265, Cys1232–Cys1246, Cys1306–Cys1356, and Cys1331–Cys1347. Asn748 carries an N-linked (GlcNAc...) asparagine glycan. The residue at position 785 (Tyr785) is an Iodotyrosine. N-linked (GlcNAc...) asparagine glycosylation occurs at Asn817. Position 867 is an iodotyrosine; alternate (Tyr867). Tyr867 is modified (diiodotyrosine; alternate). Diiodotyrosine is present on Tyr884. N-linked (GlcNAc...) asparagine glycosylation is present at Asn948. Tyr993 carries the post-translational modification Iodotyrosine; alternate. The residue at position 993 (Tyr993) is a Diiodotyrosine; alternate. The N-linked (GlcNAc...) asparagine glycan is linked to Asn1017. An N-linked (GlcNAc...) asparagine glycan is attached at Asn1141. The residue at position 1310 (Tyr1310) is an Iodotyrosine. At Tyr1310 the chain carries Thyroxine. Asn1349 and Asn1365 each carry an N-linked (GlcNAc...) asparagine glycan. Cystine bridges form between Cys1441/Cys1458, Cys1461/Cys1472, Cys1475/Cys1489, Cys1492/Cys1509, Cys1513/Cys1522, Cys1542/Cys1564, Cys1602/Cys1626, Cys1606/Cys1612, and Cys1638/Cys1661. 3 Type II repeats span residues 1455 to 1468 (PLGC…SFSQ), 1469 to 1485 (DGKC…GQAG), and 1486 to 1502 (SSAC…TITG). In terms of domain architecture, Thyroglobulin type-1 11 spans 1510-1564 (VTDCQRDEAGLQCDQNGQYQANQKDMDSGEVFCVDSEGQRLQWLQTEAGLSESQC). The Type IIIA repeat unit spans residues 1602–1722 (CLADCADDEA…GTNLTDTHLF (121 aa)). Asn1715 carries an N-linked (GlcNAc...) asparagine glycan. Intrachain disulfides connect Cys1723–Cys1748, Cys1727–Cys1733, Cys1732–Cys1834, and Cys1759–Cys1776. The Type IIIB repeat unit spans residues 1723 to 1891 (CLLACDQDSC…LFSAEQANLW (169 aa)). Asn1773 and Asn1866 each carry an N-linked (GlcNAc...) asparagine glycan. Intrachain disulfides connect Cys1892–Cys1918, Cys1896–Cys1903, Cys1927–Cys1938, Cys1995–Cys2023, Cys1999–Cys2005, Cys2004–Cys2075, and Cys2034–Cys2047. The Type IIIA repeat unit spans residues 1892–1994 (CLSRCAQEPV…EKLISNGFFE (103 aa)). Residue Asn1937 is glycosylated (N-linked (GlcNAc...) asparagine). Residues 1995–2127 (CERLCDRDPC…SATRNFSLAQ (133 aa)) form a Type IIIB repeat. N-linked (GlcNAc...) asparagine glycosylation occurs at Asn2012. An N-linked (GlcNAc...) asparagine glycan is attached at Asn2122. A Type IIIA repeat occupies 2128 to 2185 (DFCLQECSRHQDCLVTTLQIQQGVVRCVFYPDIQSCEHSLRSKTCWLLLHEEAAYIYR). 3 disulfides stabilise this stretch: Cys2130-Cys2154, Cys2134-Cys2140, and Cys2163-Cys2172. Tyr2184 bears the Iodotyrosine mark. A cholinesterase-like (ChEL) region spans residues 2188–2768 (GAPLHQSDGI…LEPVPKSYSK (581 aa)). Asn2251 carries an N-linked (GlcNAc...) asparagine glycan. An intrachain disulfide couples Cys2265 to Cys2282. 2 N-linked (GlcNAc...) asparagine glycosylation sites follow: Asn2296 and Asn2445. Cysteines 2443 and 2454 form a disulfide. The residue at position 2541 (Tyr2541) is a Thyroxine. Residue Tyr2574 is modified to Iodotyrosine; alternate. Position 2574 is a thyroxine; alternate (Tyr2574). Residue Tyr2574 is modified to Triiodothyronine; alternate. Tyr2574 is modified (diiodotyrosine; alternate). N-linked (GlcNAc...) asparagine glycosylation occurs at Asn2583. 2 positions are modified to iodotyrosine: Tyr2588 and Tyr2618. A disulfide bond links Cys2592 and Cys2716. Residue Tyr2698 is modified to Diiodotyrosine. Positions 2731–2768 (GAKDAQLTKSGEEDLEVGPGSEEDFSGSLEPVPKSYSK) are disordered. Positions 2743–2755 (EDLEVGPGSEEDF) are enriched in acidic residues. Iodotyrosine; alternate is present on Tyr2766. Tyr2766 is modified (thyroxine; alternate). Triiodothyronine; alternate is present on Tyr2766. Tyr2766 carries the diiodotyrosine; alternate modification.

The protein belongs to the type-B carboxylesterase/lipase family. In terms of assembly, monomer. Homodimer (via ChEL region); occurs in the endoplasmic reticulum and is required for export to the Golgi apparatus. Homooligomer; disulfide-linked; stored in this form in the thyroid follicle lumen. Post-translationally, iodinated on tyrosine residues by TPO. There are 4 pairs of iodinated tyrosines used for coupling: acceptor Tyr-25 is coupled to donor Tyr-150 or Tyr-235, acceptor Tyr-2574 is coupled to donor Tyr-2541, acceptor Tyr-2766 in monomer 1 is coupled to donor Tyr-2766 in monomer 2 and acceptor Tyr-1310 in monomer 1 is coupled to donor Tyr-109 in monomer 2. Sulfated tyrosines are desulfated during iodination. In terms of processing, undergoes sequential proteolysis by cathepsins to release thyroxine (T4) and triiodothyronine (T3) hormones. In the thyroid follicle lumen, cross-linked TG (storage form) is solubilized by limited proteolysis mediated by cathepsins CTSB and/or CTSL. Partially cleaved TG is further processed by CTSK/cathepsin K and/or CTSL resulting in the release of thyroxine (T4). Following endocytosis, further processing occurs leading to the release of triiodothyronine (T3) and more T4 hormones. In terms of tissue distribution, specifically expressed in the thyroid gland.

The protein resides in the secreted. Functionally, acts as a substrate for the production of iodinated thyroid hormones thyroxine (T4) and triiodothyronine (T3). The synthesis of T3 and T4 involves iodination of selected tyrosine residues of TG/thyroglobulin followed by their oxidative coupling. Following TG re-internalization and lysosomal-mediated proteolysis, T3 and T4 are released from the polypeptide backbone leading to their secretion into the bloodstream. One dimer produces 7 thyroid hormone molecules. In Rattus norvegicus (Rat), this protein is Thyroglobulin (Tg).